The chain runs to 82 residues: Small ribosomal subunit protein bS18 (82 aa).

It belongs to the bacterial ribosomal protein bS18 family. In terms of assembly, part of the 30S ribosomal subunit. Forms a tight heterodimer with protein bS6.

Its function is as follows. Binds as a heterodimer with protein bS6 to the central domain of the 16S rRNA, where it helps stabilize the platform of the 30S subunit. The sequence is that of Small ribosomal subunit protein bS18 from Chlamydia pneumoniae (Chlamydophila pneumoniae).